Consider the following 805-residue polypeptide: Centrosomal protein of 85 kDa-like (805 aa).

Disordered stretches follow at residues 1–27 and 50–89; these read MWGRFLAPEASGRDSPGGARSFPAGPD and RNNHIRRHSIASDSGDTGIGTSCSDSVEDHSTSSGTLSFK. Ser15 is subject to Phosphoserine. Residues 60 to 74 are compositionally biased toward polar residues; that stretch reads ASDSGDTGIGTSCSD. The residue at position 207 (Ser207) is a Phosphoserine. Residues 439-682 are a coiled coil; it reads SQQGEFEQKL…LENQRQTDET (244 aa).

This sequence belongs to the CEP85 family. In terms of tissue distribution, isoform 1 and isoform 4 are expressed in spleen, lymph, thymus, tonsil and peripheral blood leukocytes, with isoform 1 expressed at higher levels. Isoform 4 is detected in K-562 leukemia cells and in the blood of precursor T lymphoblastic lymphoma (T-ALL) patients.

It is found in the cytoplasm. The protein resides in the cytoskeleton. It localises to the microtubule organizing center. Its subcellular location is the centrosome. In terms of biological role, plays an essential role in neuronal cell migration. The chain is Centrosomal protein of 85 kDa-like from Homo sapiens (Human).